Consider the following 143-residue polypeptide: Transcriptional regulator MraZ (143 aa).

SpoVT-AbrB domains are found at residues 5–47 and 76–119; these read EFRH…PMKE and ATEC…DEAR.

It belongs to the MraZ family. As to quaternary structure, forms oligomers.

It is found in the cytoplasm. The protein resides in the nucleoid. This is Transcriptional regulator MraZ from Enterococcus hirae.